Here is a 219-residue protein sequence, read N- to C-terminus: Ribose-5-phosphate isomerase A (219 aa).

Substrate-binding positions include 28–31, 81–84, and 94–97; these read TGST, DGAD, and KGGG. Glu-103 (proton acceptor) is an active-site residue. Residue Lys-121 participates in substrate binding.

Belongs to the ribose 5-phosphate isomerase family. In terms of assembly, homodimer.

It carries out the reaction aldehydo-D-ribose 5-phosphate = D-ribulose 5-phosphate. It participates in carbohydrate degradation; pentose phosphate pathway; D-ribose 5-phosphate from D-ribulose 5-phosphate (non-oxidative stage): step 1/1. In terms of biological role, catalyzes the reversible conversion of ribose-5-phosphate to ribulose 5-phosphate. In Pectobacterium atrosepticum (strain SCRI 1043 / ATCC BAA-672) (Erwinia carotovora subsp. atroseptica), this protein is Ribose-5-phosphate isomerase A.